The following is a 178-amino-acid chain: Ribonuclease M5 (178 aa).

One can recognise a Toprim domain in the interval 10–94 (DGVIVCEGKT…YVDMNARLKN (85 aa)). Mg(2+)-binding residues include Glu16, Asp62, and Asp64.

It belongs to the ribonuclease M5 family. It depends on Mg(2+) as a cofactor.

It is found in the cytoplasm. The enzyme catalyses Endonucleolytic cleavage of RNA, removing 21 and 42 nucleotides, respectively, from the 5'- and 3'-termini of a 5S-rRNA precursor.. Its function is as follows. Required for correct processing of both the 5' and 3' ends of 5S rRNA precursor. Cleaves both sides of a double-stranded region yielding mature 5S rRNA in one step. This chain is Ribonuclease M5 (rnmV), found in Mycoplasma genitalium (strain ATCC 33530 / DSM 19775 / NCTC 10195 / G37) (Mycoplasmoides genitalium).